The chain runs to 327 residues: Annexin A8 (327 aa).

4 Annexin repeats span residues 21-92 (FNPD…ALMY), 93-164 (PPYS…CLLQ), 177-249 (GLVL…TVVK), and 253-324 (NVHS…NLVG). Residues methionine 266, glycine 268, glycine 270, and aspartate 310 each contribute to the Ca(2+) site.

The protein belongs to the annexin family.

Its function is as follows. This protein is an anticoagulant protein that acts as an indirect inhibitor of the thromboplastin-specific complex, which is involved in the blood coagulation cascade. The chain is Annexin A8 (Anxa8) from Mus musculus (Mouse).